Consider the following 110-residue polypeptide: UPF0122 protein SPG_1182 (110 aa).

The protein belongs to the UPF0122 family.

Might take part in the signal recognition particle (SRP) pathway. This is inferred from the conservation of its genetic proximity to ftsY/ffh. May be a regulatory protein. The polypeptide is UPF0122 protein SPG_1182 (Streptococcus pneumoniae serotype 19F (strain G54)).